The chain runs to 296 residues: GTPase Era (296 aa).

The Era-type G domain occupies 7–174 (RTGFVAIVGR…LEEIAQRLPE (168 aa)). The G1 stretch occupies residues 15-22 (GRPNVGKS). Position 15 to 22 (15 to 22 (GRPNVGKS)) interacts with GTP. Residues 41 to 45 (QTTRH) are G2. The G3 stretch occupies residues 62-65 (DTPG). GTP-binding positions include 62–66 (DTPGF) and 123–126 (SKID). Positions 123–126 (SKID) are G4. Positions 153 to 155 (VSA) are G5. A KH type-2 domain is found at 197–281 (VREKIFRLVG…HLEVYIKVRK (85 aa)).

This sequence belongs to the TRAFAC class TrmE-Era-EngA-EngB-Septin-like GTPase superfamily. Era GTPase family. As to quaternary structure, monomer.

Its subcellular location is the cytoplasm. It localises to the cell inner membrane. Its function is as follows. An essential GTPase that binds both GDP and GTP, with rapid nucleotide exchange. Plays a role in 16S rRNA processing and 30S ribosomal subunit biogenesis and possibly also in cell cycle regulation and energy metabolism. In Bordetella avium (strain 197N), this protein is GTPase Era.